Consider the following 364-residue polypeptide: Protein leg1b (364 aa).

The first 22 residues, 1-22 (MSEMGFLRSVAAVLLLAVFSHA), serve as a signal peptide directing secretion. N-linked (GlcNAc...) asparagine glycosylation occurs at N70.

The protein belongs to the LEG1 family. Detected in all tissues tested, with the highest levels in serum (at protein level). At mRNA level, only expressed in liver.

The protein resides in the secreted. Involved in early development of liver, exocrine pancreas and intestine, probably through cell cycle regulation. In liver, its function is partially redundant with leg1a function. This is Protein leg1b from Danio rerio (Zebrafish).